We begin with the raw amino-acid sequence, 224 residues long: Protein-L-isoaspartate O-methyltransferase (224 aa).

Ser-70 is a catalytic residue.

It belongs to the methyltransferase superfamily. L-isoaspartyl/D-aspartyl protein methyltransferase family.

The protein resides in the cytoplasm. The enzyme catalyses [protein]-L-isoaspartate + S-adenosyl-L-methionine = [protein]-L-isoaspartate alpha-methyl ester + S-adenosyl-L-homocysteine. Its function is as follows. Catalyzes the methyl esterification of L-isoaspartyl residues in peptides and proteins that result from spontaneous decomposition of normal L-aspartyl and L-asparaginyl residues. It plays a role in the repair and/or degradation of damaged proteins. In Cellvibrio japonicus (strain Ueda107) (Pseudomonas fluorescens subsp. cellulosa), this protein is Protein-L-isoaspartate O-methyltransferase.